Reading from the N-terminus, the 315-residue chain is Protein-export membrane protein SecF (315 aa).

Helical transmembrane passes span 35-55, 152-172, 181-201, 205-225, 242-264, and 282-302; these read MVLY…VHFP, QGIK…FLFF, IIFS…ILGI, TATI…NILL, LSAV…ILWL, and LLAD…WYIA.

This sequence belongs to the SecD/SecF family. SecF subfamily. In terms of assembly, part of the protein translocation apparatus. Forms a complex with SecD.

The protein localises to the cell membrane. Involved in protein export. The polypeptide is Protein-export membrane protein SecF (Thermococcus gammatolerans (strain DSM 15229 / JCM 11827 / EJ3)).